The primary structure comprises 483 residues: ATP synthase subunit beta (483 aa).

169 to 176 (GGAGVGKT) provides a ligand contact to ATP.

It belongs to the ATPase alpha/beta chains family. F-type ATPases have 2 components, CF(1) - the catalytic core - and CF(0) - the membrane proton channel. CF(1) has five subunits: alpha(3), beta(3), gamma(1), delta(1), epsilon(1). CF(0) has three main subunits: a(1), b(2) and c(9-12). The alpha and beta chains form an alternating ring which encloses part of the gamma chain. CF(1) is attached to CF(0) by a central stalk formed by the gamma and epsilon chains, while a peripheral stalk is formed by the delta and b chains.

Its subcellular location is the cell membrane. It carries out the reaction ATP + H2O + 4 H(+)(in) = ADP + phosphate + 5 H(+)(out). Functionally, produces ATP from ADP in the presence of a proton gradient across the membrane. The catalytic sites are hosted primarily by the beta subunits. The sequence is that of ATP synthase subunit beta from Rhodococcus opacus (strain B4).